The chain runs to 742 residues: Pyriculol/pyriculariol biosynthesis cluster transcription factor 1 (742 aa).

The segment at residues 23–49 (CVLCQHRKIKCDRSFPCANCQRANVQC) is a DNA-binding region (zn(2)-C6 fungal-type). Positions 85–116 (GKPDIARLTTKRSSLSQSPPKGEEPLPEWNRH) are disordered. The segment covering 105-116 (KGEEPLPEWNRH) has biased composition (basic and acidic residues).

Its subcellular location is the nucleus. In terms of biological role, transcriptional regulator; part of the gene cluster that mediates the biosynthesis of pyriculol and pyriculariol, two heptaketides that induce lesion formation upon application on rice leaves but are dispensable for pathogenicity. With TRF2, negatively regulates the expression of the gene cluster and the subsequent pyriculol and pyriculariol production. The chain is Pyriculol/pyriculariol biosynthesis cluster transcription factor 1 from Pyricularia oryzae (strain 70-15 / ATCC MYA-4617 / FGSC 8958) (Rice blast fungus).